Consider the following 227-residue polypeptide: PKHD-type hydroxylase Veis_3084 (227 aa).

Positions 27 to 51 are disordered; sequence DDGKDSAGTQARQAKNNQQLPRDSE. Positions 33–47 are enriched in polar residues; sequence AGTQARQAKNNQQLP. Positions 78–179 constitute a Fe2OG dioxygenase domain; it reads RVFPPRVNRY…RMACFFWVES (102 aa). 3 residues coordinate Fe cation: His-97, Asp-99, and His-160. Arg-170 lines the 2-oxoglutarate pocket.

Fe(2+) serves as cofactor. It depends on L-ascorbate as a cofactor.

This is PKHD-type hydroxylase Veis_3084 from Verminephrobacter eiseniae (strain EF01-2).